The sequence spans 396 residues: Initiation-specific alpha-1,6-mannosyltransferase (396 aa).

Residues 1 to 7 are Cytoplasmic-facing; that stretch reads MLRLRLR. The chain crosses the membrane as a helical; Signal-anchor for type II membrane protein span at residues 8–28; that stretch reads SIVIGAAIAGSILLLFNHGSI. Topologically, residues 29–396 are lumenal; it reads EGMEDLTEIS…HFFAGSWKDD (368 aa). The short motif at 229 to 231 is the DXD motif element; sequence DID. A glycan (N-linked (GlcNAc...) asparagine) is linked at Asn345.

The protein belongs to the glycosyltransferase 32 family. Mn(2+) serves as cofactor.

It localises to the endoplasmic reticulum membrane. The protein resides in the golgi apparatus membrane. The catalysed reaction is Transfers an alpha-D-mannosyl residue from GDP-mannose into lipid-linked oligosaccharide, forming an alpha-(1-&gt;6)-D-mannosyl-D-mannose linkage.. Mannosyltransferase involved in outer chain elongation of asparagine-linked oligosaccharides of the type Man(9)GlcNAc(2). May otherwise add the first alpha-1,6-mannose to the Man(8)GlcNAc(2) core oligosaccharide from the ER. Represents the first enzymatic event required for synthesis of outer chain mannose linkages on yeast secretory proteins. The polypeptide is Initiation-specific alpha-1,6-mannosyltransferase (Schizosaccharomyces pombe (strain 972 / ATCC 24843) (Fission yeast)).